Here is an 85-residue protein sequence, read N- to C-terminus: Large ribosomal subunit protein bL27 (85 aa).

Residues 1–10 show a composition bias toward gly residues; sequence MAQKKGGGST. Residues 1–20 are disordered; it reads MAQKKGGGSTRNGRDSQPKM.

It belongs to the bacterial ribosomal protein bL27 family.

The chain is Large ribosomal subunit protein bL27 from Methylibium petroleiphilum (strain ATCC BAA-1232 / LMG 22953 / PM1).